A 224-amino-acid polypeptide reads, in one-letter code: Lipoprotein-releasing system ATP-binding protein LolD (224 aa).

Residues 6-224 (VRLRELRRSF…VVRLHEGVLE (219 aa)) form the ABC transporter domain. Residue 42-49 (GPSGSGKS) coordinates ATP.

It belongs to the ABC transporter superfamily. Lipoprotein translocase (TC 3.A.1.125) family. In terms of assembly, the complex is composed of two ATP-binding proteins (LolD) and two transmembrane proteins (LolC and LolE).

It localises to the cell inner membrane. Its function is as follows. Part of the ABC transporter complex LolCDE involved in the translocation of mature outer membrane-directed lipoproteins, from the inner membrane to the periplasmic chaperone, LolA. Responsible for the formation of the LolA-lipoprotein complex in an ATP-dependent manner. The chain is Lipoprotein-releasing system ATP-binding protein LolD from Novosphingobium aromaticivorans (strain ATCC 700278 / DSM 12444 / CCUG 56034 / CIP 105152 / NBRC 16084 / F199).